Consider the following 237-residue polypeptide: Phosphoribosylaminoimidazole-succinocarboxamide synthase (237 aa).

The protein belongs to the SAICAR synthetase family.

It catalyses the reaction 5-amino-1-(5-phospho-D-ribosyl)imidazole-4-carboxylate + L-aspartate + ATP = (2S)-2-[5-amino-1-(5-phospho-beta-D-ribosyl)imidazole-4-carboxamido]succinate + ADP + phosphate + 2 H(+). The protein operates within purine metabolism; IMP biosynthesis via de novo pathway; 5-amino-1-(5-phospho-D-ribosyl)imidazole-4-carboxamide from 5-amino-1-(5-phospho-D-ribosyl)imidazole-4-carboxylate: step 1/2. In Psychrobacter cryohalolentis (strain ATCC BAA-1226 / DSM 17306 / VKM B-2378 / K5), this protein is Phosphoribosylaminoimidazole-succinocarboxamide synthase.